The sequence spans 162 residues: Putative 4-hydroxy-4-methyl-2-oxoglutarate aldolase (162 aa).

Substrate contacts are provided by residues 75 to 78 (GDML) and Arg97. Asp98 contributes to the a divalent metal cation binding site.

This sequence belongs to the class II aldolase/RraA-like family. In terms of assembly, homotrimer. Requires a divalent metal cation as cofactor.

The catalysed reaction is 4-hydroxy-4-methyl-2-oxoglutarate = 2 pyruvate. It carries out the reaction oxaloacetate + H(+) = pyruvate + CO2. In terms of biological role, catalyzes the aldol cleavage of 4-hydroxy-4-methyl-2-oxoglutarate (HMG) into 2 molecules of pyruvate. Also contains a secondary oxaloacetate (OAA) decarboxylase activity due to the common pyruvate enolate transition state formed following C-C bond cleavage in the retro-aldol and decarboxylation reactions. The sequence is that of Putative 4-hydroxy-4-methyl-2-oxoglutarate aldolase from Pseudomonas aeruginosa (strain LESB58).